The following is a 266-amino-acid chain: Single-stranded DNA-binding protein WHY1, chloroplastic (266 aa).

The transit peptide at Met1 to Val37 directs the protein to the chloroplast. The tract at residues Ser53 to Ala81 is disordered. The segment at Lys94–Leu99 is required for ssDNA binding. Residues Lys172–Lys185 carry the Nuclear localization signal motif.

The protein belongs to the Whirly family. In terms of assembly, homotetramer.

It is found in the plastid. The protein localises to the chloroplast stroma. It localises to the nucleus. In terms of biological role, single-stranded DNA and RNA binding protein that maintains plastid genome stability by preventing break-induced and short homology-dependent illegitimate recombinations. Functions in RNA metabolism and is involved in the maturation of the atpF and 23S ribosomal RNAs. The protein is Single-stranded DNA-binding protein WHY1, chloroplastic (WHY1) of Zea mays (Maize).